The chain runs to 55 residues: uncharacterized protein (55 aa).

Residues 1-25 (MKNNDKKKEVQRKYREEIKKKKQKN) are disordered. A helical transmembrane segment spans residues 35–55 (TIIVVTIIVLFIFFTYTLQGF).

It localises to the membrane. This is an uncharacterized protein from Bacillus subtilis (strain 168).